The following is a 128-amino-acid chain: Transcription antitermination protein NusB (128 aa).

The protein belongs to the NusB family.

Its function is as follows. Involved in transcription antitermination. Required for transcription of ribosomal RNA (rRNA) genes. Binds specifically to the boxA antiterminator sequence of the ribosomal RNA (rrn) operons. This is Transcription antitermination protein NusB from Listeria welshimeri serovar 6b (strain ATCC 35897 / DSM 20650 / CCUG 15529 / CIP 8149 / NCTC 11857 / SLCC 5334 / V8).